A 27-amino-acid chain; its full sequence is Metalloproteinase inhibitor 1 (27 aa).

The span at 1–12 (IEPERQEEEEEE) shows a compositional bias: acidic residues. The interval 1–27 (IEPERQEEEEEETRQRVRRGQVRQQQQ) is disordered.

Metalloproteinase inhibitor, active on a globulinase from L.albus seeds, thermolysin and gelatinase B. The sequence is that of Metalloproteinase inhibitor 1 from Lupinus albus (White lupine).